Here is a 147-residue protein sequence, read N- to C-terminus: Large ribosomal subunit protein uL22 (147 aa).

The disordered stretch occupies residues 110–147 (EEKKTVAKKAPAAKKTTTTKAPAKKTTSTKKATAKKES). Low complexity predominate over residues 117-140 (KKAPAAKKTTTTKAPAKKTTSTKK).

The protein belongs to the universal ribosomal protein uL22 family. Part of the 50S ribosomal subunit.

In terms of biological role, this protein binds specifically to 23S rRNA; its binding is stimulated by other ribosomal proteins, e.g. L4, L17, and L20. It is important during the early stages of 50S assembly. It makes multiple contacts with different domains of the 23S rRNA in the assembled 50S subunit and ribosome. The globular domain of the protein is located near the polypeptide exit tunnel on the outside of the subunit, while an extended beta-hairpin is found that lines the wall of the exit tunnel in the center of the 70S ribosome. The polypeptide is Large ribosomal subunit protein uL22 (Campylobacter jejuni subsp. jejuni serotype O:23/36 (strain 81-176)).